We begin with the raw amino-acid sequence, 461 residues long: Ribulose bisphosphate carboxylase (461 aa).

Asparagine 112 serves as a coordination point for substrate. The Proton acceptor role is filled by lysine 167. Residue lysine 169 coordinates substrate. Residues lysine 192, aspartate 194, and glutamate 195 each contribute to the Mg(2+) site. Lysine 192 carries the post-translational modification N6-carboxylysine. The active-site Proton acceptor is the histidine 288. Residues arginine 289, histidine 322, and serine 369 each contribute to the substrate site.

It belongs to the RuBisCO large chain family. Type II subfamily. In terms of assembly, homodimer. It depends on Mg(2+) as a cofactor.

It carries out the reaction 2 (2R)-3-phosphoglycerate + 2 H(+) = D-ribulose 1,5-bisphosphate + CO2 + H2O. It catalyses the reaction D-ribulose 1,5-bisphosphate + O2 = 2-phosphoglycolate + (2R)-3-phosphoglycerate + 2 H(+). Its function is as follows. RuBisCO catalyzes two reactions: the carboxylation of D-ribulose 1,5-bisphosphate, the primary event in carbon dioxide fixation, as well as the oxidative fragmentation of the pentose substrate. Both reactions occur simultaneously and in competition at the same active site. This Rhodopseudomonas palustris (strain HaA2) protein is Ribulose bisphosphate carboxylase.